The following is a 309-amino-acid chain: Calcium homeostasis modulator protein 5 (309 aa).

Residues 1–15 lie on the Cytoplasmic side of the membrane; it reads MDAFQSILKFFLNQK. The chain crosses the membrane as a helical span at residues 16 to 37; it reads TAIGYSFMALLTVGSERLFSLV. The a 1,2-diacyl-sn-glycero-3-phosphate site is built by Arg32 and Val37. Over 38 to 45 the chain is Extracellular; sequence AFKCPCSV. 3 disulfide bridges follow: Cys41–Cys127, Cys43–Cys158, and Cys142–Cys149. The helical transmembrane segment at 46-70 threads the bilayer; it reads ENTAYGLVFLFAPAWVLLILGFFLN. The Cytoplasmic portion of the chain corresponds to 71 to 99; the sequence is NKAWRLFTGCCMNPKKIFPRRRCCRFFYV. Residues 100–129 form a helical membrane-spanning segment; that stretch reads LGHIILSSLVAPVMWLSVALLNGTFYECAM. Residue Asn121 coordinates a 1,2-diacyl-sn-glycero-3-phosphate. The Extracellular segment spans residues 130-174; the sequence is SGTRSTRLLEMICKGKPKECWEELHKVSCGKSSMAAMESEEVRLS. The chain crosses the membrane as a helical span at residues 175–200; that stretch reads LQAQSQILGWCLICSASFLSLLTTCY. At 201–309 the chain is on the cytoplasmic side; the sequence is ARCRSKVSYL…MILVGTAQSL (109 aa). Arg202 is an a 1,2-diacyl-sn-glycero-3-phosphate binding site.

This sequence belongs to the CALHM family. Oligomerizes to form undecameric cone-shaped channels.

The protein localises to the membrane. May assemble to form large pore channels with gating and ion conductance likely regulated by membrane lipids. This chain is Calcium homeostasis modulator protein 5, found in Mus musculus (Mouse).